The primary structure comprises 256 residues: Sugar fermentation stimulation protein homolog (256 aa).

The protein belongs to the SfsA family.

The sequence is that of Sugar fermentation stimulation protein homolog from Prochlorococcus marinus (strain MIT 9211).